The sequence spans 177 residues: MDFHGTTILGVKRNGKTVICGDGQVTMGETIFKGNAKKVRRLGEGKVISGFAGSVADALALYERFEGKYKSSHGNLMKAAVELTKEWRMDKALRRLEALLLVADKENIFLISGNGEVMEPQEDAIAIGSGGPYAYAAAMALLRNTDLDAEEIAQKAIKIAGEICIYTNDNITMEIIE.

Residue Thr6 is part of the active site. Na(+) is bound by residues Gly161, Cys164, and Thr167.

This sequence belongs to the peptidase T1B family. HslV subfamily. In terms of assembly, a double ring-shaped homohexamer of HslV is capped on each side by a ring-shaped HslU homohexamer. The assembly of the HslU/HslV complex is dependent on binding of ATP.

It localises to the cytoplasm. The enzyme catalyses ATP-dependent cleavage of peptide bonds with broad specificity.. With respect to regulation, allosterically activated by HslU binding. Its function is as follows. Protease subunit of a proteasome-like degradation complex believed to be a general protein degrading machinery. The sequence is that of ATP-dependent protease subunit HslV from Petrotoga mobilis (strain DSM 10674 / SJ95).